The chain runs to 462 residues: tRNA-2-methylthio-N(6)-dimethylallyladenosine synthase (462 aa).

The MTTase N-terminal domain occupies lysine 28–alanine 144. Residues cysteine 37, cysteine 73, cysteine 107, cysteine 181, cysteine 185, and cysteine 188 each coordinate [4Fe-4S] cluster. The 232-residue stretch at alanine 167–alanine 398 folds into the Radical SAM core domain. Residues aspartate 401–valine 462 enclose the TRAM domain.

The protein belongs to the methylthiotransferase family. MiaB subfamily. Monomer. [4Fe-4S] cluster is required as a cofactor.

It localises to the cytoplasm. It catalyses the reaction N(6)-dimethylallyladenosine(37) in tRNA + (sulfur carrier)-SH + AH2 + 2 S-adenosyl-L-methionine = 2-methylsulfanyl-N(6)-dimethylallyladenosine(37) in tRNA + (sulfur carrier)-H + 5'-deoxyadenosine + L-methionine + A + S-adenosyl-L-homocysteine + 2 H(+). In terms of biological role, catalyzes the methylthiolation of N6-(dimethylallyl)adenosine (i(6)A), leading to the formation of 2-methylthio-N6-(dimethylallyl)adenosine (ms(2)i(6)A) at position 37 in tRNAs that read codons beginning with uridine. The polypeptide is tRNA-2-methylthio-N(6)-dimethylallyladenosine synthase (Jannaschia sp. (strain CCS1)).